Consider the following 329-residue polypeptide: Ribosomal protein L11 methyltransferase (329 aa).

S-adenosyl-L-methionine contacts are provided by Thr177, Gly198, Asp220, and Asn264.

It belongs to the methyltransferase superfamily. PrmA family.

It is found in the cytoplasm. The enzyme catalyses L-lysyl-[protein] + 3 S-adenosyl-L-methionine = N(6),N(6),N(6)-trimethyl-L-lysyl-[protein] + 3 S-adenosyl-L-homocysteine + 3 H(+). Its function is as follows. Methylates ribosomal protein L11. The sequence is that of Ribosomal protein L11 methyltransferase from Helicobacter pylori (strain J99 / ATCC 700824) (Campylobacter pylori J99).